The primary structure comprises 478 residues: Pyruvate kinase (478 aa).

Residue Arg-36 coordinates substrate. Residues Asn-38, Ser-40, and Asp-70 each contribute to the K(+) site. 38 to 41 (NFSH) is an ATP binding site. Residues Arg-77 and Lys-160 each coordinate ATP. Glu-225 serves as a coordination point for Mg(2+). Gly-251, Asp-252, and Thr-284 together coordinate substrate. Residue Asp-252 participates in Mg(2+) binding.

The protein belongs to the pyruvate kinase family. In terms of assembly, homotetramer. The cofactor is Mg(2+). Requires K(+) as cofactor.

The enzyme catalyses pyruvate + ATP = phosphoenolpyruvate + ADP + H(+). The protein operates within carbohydrate degradation; glycolysis; pyruvate from D-glyceraldehyde 3-phosphate: step 5/5. Allosterically activated by AMP and by several sugar phosphates. Belongs to type II PK. This Haemophilus influenzae (strain ATCC 51907 / DSM 11121 / KW20 / Rd) protein is Pyruvate kinase (pykA).